The sequence spans 418 residues: Tyrosine--tRNA ligase (418 aa).

An L-tyrosine-binding site is contributed by Tyr34. The 'HIGH' region signature appears at 39–48 (PTADSLHLGH). Residues Tyr169 and Gln173 each contribute to the L-tyrosine site. The 'KMSKS' region motif lies at 229–233 (KFGKS). Residue Lys232 participates in ATP binding. An S4 RNA-binding domain is found at 352 to 418 (NNIVELLVSS…GKKKYFVLTY (67 aa)).

The protein belongs to the class-I aminoacyl-tRNA synthetase family. TyrS type 1 subfamily. As to quaternary structure, homodimer.

The protein localises to the cytoplasm. The enzyme catalyses tRNA(Tyr) + L-tyrosine + ATP = L-tyrosyl-tRNA(Tyr) + AMP + diphosphate + H(+). In terms of biological role, catalyzes the attachment of tyrosine to tRNA(Tyr) in a two-step reaction: tyrosine is first activated by ATP to form Tyr-AMP and then transferred to the acceptor end of tRNA(Tyr). The sequence is that of Tyrosine--tRNA ligase from Streptococcus pneumoniae (strain Taiwan19F-14).